We begin with the raw amino-acid sequence, 170 residues long: Bifunctional protein PyrR (170 aa).

The short motif at 90-102 (LVLVDDVLMSGRT) is the PRPP-binding element.

The protein belongs to the purine/pyrimidine phosphoribosyltransferase family. PyrR subfamily.

The catalysed reaction is UMP + diphosphate = 5-phospho-alpha-D-ribose 1-diphosphate + uracil. Functionally, regulates the transcription of the pyrimidine nucleotide (pyr) operon in response to exogenous pyrimidines. Its function is as follows. Also displays a weak uracil phosphoribosyltransferase activity which is not physiologically significant. This chain is Bifunctional protein PyrR, found in Pseudomonas aeruginosa (strain LESB58).